Here is a 708-residue protein sequence, read N- to C-terminus: MFEKPVVKTFQYGNHTVTLETGVIARQATAAVMVTMDDTAVFVSVVGKKEAVPGQDFFPLTVNYQERTYAAGKIPGGFFKREGRPSEGETLTARLIDRPIRPLFPEGFNNEVQVIATVVSVNPDVQPDIPTMIGTSAALAISGIPFNGPIGAARVGHIDGQLVLNPSNTELNASRLDLVVAGTESAVLMVESEADNLTEEEMLSAVVFGHDQQQAVIKAINEFAAEVATPSWNWVAPEANTALNEKVADLAEAKLVEAYKITEKMARYDRIHEIAAEVNAVILAEDPEADAKEIHTIFHDLEKTVVRRSIIAGNPRIDGREKDMVRALDVRTGVLPRTHGSSLFTRGETQALVTATLGTQRDAQIIDELTGEKKDYFLLHYNFPPYCVGETGFVGSPKRREIGHGKLAKRGIAAVMPSIDEFPYTVRVVSEITESNGSSSMASVCGTSLALMDAGVPIKASVAGIAMGLVKEGDDFVVLSDILGDEDHLGDMDFKVAGTSTGITALQMDIKIEGITKEIMQIALNQAQGARKHILSVMDQAISGARDDISEFAPRIHTMKISADKIKDVIGKGGAVIRALTEETGTTIEIEDDGTIKIAATEGAAAKEAIRRIQEITAEVEVGVIYTGKVARLADFGAFVTILPGKDGLVHISQIADKRVEKVSDYLTEGQEVQVKVLEIDRQGRVRLSMKEAVEKPVEAEAPAAEEE.

The Mg(2+) site is built by D487 and D493. The KH domain maps to 554–613 (PRIHTMKISADKIKDVIGKGGAVIRALTEETGTTIEIEDDGTIKIAATEGAAAKEAIRRI). The 69-residue stretch at 623–691 (GVIYTGKVAR…RQGRVRLSMK (69 aa)) folds into the S1 motif domain.

The protein belongs to the polyribonucleotide nucleotidyltransferase family. As to quaternary structure, component of the RNA degradosome, which is a multiprotein complex involved in RNA processing and mRNA degradation. Mg(2+) serves as cofactor.

It localises to the cytoplasm. The catalysed reaction is RNA(n+1) + phosphate = RNA(n) + a ribonucleoside 5'-diphosphate. Involved in mRNA degradation. Catalyzes the phosphorolysis of single-stranded polyribonucleotides processively in the 3'- to 5'-direction. This Vibrio vulnificus (strain CMCP6) protein is Polyribonucleotide nucleotidyltransferase.